A 186-amino-acid polypeptide reads, in one-letter code: MANIPLLLSLADDLGRMSMVPFYEPYYCQRQRNPYLALVGPMEQQLRQLEKQVGASSGSSGAVSKIGKDGFQVCMDVSHFKPSELVVKVQDNSVLVEGNHEEREDDHGFITRHFVRRYALPPGYEADKVASTLSSDGVLTIKVPKPPAIEDKGNERIVQIQQVGPAHLNVKENPKEAVEQDNGNDK.

A sHSP domain is found at 53–161; it reads VGASSGSSGA…KGNERIVQIQ (109 aa). The interval 163–186 is disordered; the sequence is VGPAHLNVKENPKEAVEQDNGNDK. The segment covering 169–186 has biased composition (basic and acidic residues); it reads NVKENPKEAVEQDNGNDK.

It belongs to the small heat shock protein (HSP20) family.

The polypeptide is Heat shock protein 23 (Hsp23) (Drosophila melanogaster (Fruit fly)).